Reading from the N-terminus, the 327-residue chain is Tagatose 1,6-diphosphate aldolase 2 (327 aa).

It belongs to the aldolase LacD family.

The catalysed reaction is D-tagatofuranose 1,6-bisphosphate = D-glyceraldehyde 3-phosphate + dihydroxyacetone phosphate. The protein operates within carbohydrate metabolism; D-tagatose 6-phosphate degradation; D-glyceraldehyde 3-phosphate and glycerone phosphate from D-tagatose 6-phosphate: step 2/2. The protein is Tagatose 1,6-diphosphate aldolase 2 (lacD2) of Streptococcus pyogenes serotype M1.